The chain runs to 447 residues: Rab GDP dissociation inhibitor alpha (447 aa).

This sequence belongs to the Rab GDI family. In terms of assembly, interacts with RHOH. Interacts with the non-phosphorylated forms of RAB1A, RAB3A, RAB5A, RAB5B, RAB5C, RAB8A, RAB8B, RAB10, RAB12, RAB35, and RAB43.

Its subcellular location is the cytoplasm. The protein resides in the golgi apparatus. The protein localises to the trans-Golgi network. Regulates the GDP/GTP exchange reaction of most Rab proteins by inhibiting the dissociation of GDP from them, and the subsequent binding of GTP to them. Promotes the dissociation of GDP-bound Rab proteins from the membrane and inhibits their activation. Promotes the dissociation of RAB1A, RAB3A, RAB5A and RAB10 from membranes. The sequence is that of Rab GDP dissociation inhibitor alpha (GDI1) from Pongo pygmaeus (Bornean orangutan).